A 423-amino-acid chain; its full sequence is Glutamyl-tRNA reductase 2 (423 aa).

Substrate contacts are provided by residues 48-51 (TCYR), S103, 108-110 (EPQ), and Q114. Catalysis depends on C49, which acts as the Nucleophile. 183-188 (GAGEMA) provides a ligand contact to NADP(+).

It belongs to the glutamyl-tRNA reductase family. Homodimer.

It carries out the reaction (S)-4-amino-5-oxopentanoate + tRNA(Glu) + NADP(+) = L-glutamyl-tRNA(Glu) + NADPH + H(+). It functions in the pathway porphyrin-containing compound metabolism; protoporphyrin-IX biosynthesis; 5-aminolevulinate from L-glutamyl-tRNA(Glu): step 1/2. In terms of biological role, catalyzes the NADPH-dependent reduction of glutamyl-tRNA(Glu) to glutamate 1-semialdehyde (GSA). The polypeptide is Glutamyl-tRNA reductase 2 (Anaeromyxobacter sp. (strain Fw109-5)).